The following is a 789-amino-acid chain: Mediator of RNA polymerase II transcription subunit 15 (789 aa).

The interaction with SREBF1 stretch occupies residues 9 to 73 (DWRSAAFRQK…IHFRDIHNKK (65 aa)). Disordered regions lie at residues 88 to 140 (LTGG…APHG) and 257 to 326 (QQQA…PLVS). Residues 89 to 102 (TGGPTPGAAGIGMP) show a composition bias toward low complexity. Residues 108–118 (QSLGGMGGLGA) are compositionally biased toward gly residues. 3 stretches are compositionally biased toward low complexity: residues 257 to 274 (QQQA…SMQQ), 282 to 291 (ALPQQLSQLH), and 302 to 326 (AQQS…PLVS). Residue Arg-347 is modified to Asymmetric dimethylarginine. The segment at 404-531 (RFPPTSTMSA…PAGSSQAEEQ (128 aa)) is disordered. Positions 407–426 (PTSTMSAGPSSSISLGGQPT) are enriched in polar residues. The segment covering 427 to 450 (TQVSQSSLTMLSSPSPGQQVQTPQ) has biased composition (low complexity). Residues 451–463 (SMPPPPQPSPQPG) are compositionally biased toward pro residues. A compositionally biased stretch (low complexity) spans 464–483 (SQPNSNVSSGPAPSPSSFLP). Composition is skewed to polar residues over residues 494–504 (VTARTPQNFSV) and 512–530 (TPVN…QAEE). The Nuclear localization signal signature appears at 548-565 (RRMINKIDKNEDRKKDLS). Thr-604 is subject to Phosphothreonine.

It belongs to the Mediator complex subunit 15 family. Component of the Mediator complex, which is composed of MED1, MED4, MED6, MED7, MED8, MED9, MED10, MED11, MED12, MED13, MED13L, MED14, MED15, MED16, MED17, MED18, MED19, MED20, MED21, MED22, MED23, MED24, MED25, MED26, MED27, MED29, MED30, MED31, CCNC, CDK8 and CDC2L6/CDK11. The MED12, MED13, CCNC and CDK8 subunits form a distinct module termed the CDK8 module. Mediator containing the CDK8 module is less active than Mediator lacking this module in supporting transcriptional activation. Individual preparations of the Mediator complex lacking one or more distinct subunits have been variously termed ARC, CRSP, DRIP, PC2, SMCC and TRAP. Interacts with SMAD2, SMAD3, SREBF1 and SREBF2. Interacts with WWTR1. Interacts with TRIM11. In terms of processing, ubiquitinated by TRIM11, leading to proteasomal degradation.

The protein resides in the cytoplasm. Its subcellular location is the nucleus. In terms of biological role, component of the Mediator complex, a coactivator involved in the regulated transcription of nearly all RNA polymerase II-dependent genes. Mediator functions as a bridge to convey information from gene-specific regulatory proteins to the basal RNA polymerase II transcription machinery. Mediator is recruited to promoters by direct interactions with regulatory proteins and serves as a scaffold for the assembly of a functional preinitiation complex with RNA polymerase II and the general transcription factors. Required for cholesterol-dependent gene regulation. Positively regulates the Nodal signaling pathway. The polypeptide is Mediator of RNA polymerase II transcription subunit 15 (Med15) (Mus musculus (Mouse)).